A 247-amino-acid polypeptide reads, in one-letter code: V-type proton ATPase subunit D (247 aa).

Belongs to the V-ATPase D subunit family. As to quaternary structure, V-ATPase is a heteromultimeric enzyme made up of two complexes: the ATP-hydrolytic V1 complex and the proton translocation V0 complex. The V1 complex consists of three catalytic AB heterodimers that form a heterohexamer, three peripheral stalks each consisting of EG heterodimers, one central rotor including subunits D and F, and the regulatory subunits C and H. The proton translocation complex V0 consists of the proton transport subunit a, a ring of proteolipid subunits c9c'', rotary subunit d, subunits e and f, and the accessory subunits ATP6AP1/Ac45 and ATP6AP2/PRR. Interacts with SNX10.

Its subcellular location is the membrane. It localises to the cytoplasmic vesicle. The protein resides in the clathrin-coated vesicle membrane. It is found in the cytoplasm. The protein localises to the cytoskeleton. Its subcellular location is the microtubule organizing center. It localises to the centrosome. The protein resides in the cell projection. It is found in the cilium. In terms of biological role, subunit of the V1 complex of vacuolar(H+)-ATPase (V-ATPase), a multisubunit enzyme composed of a peripheral complex (V1) that hydrolyzes ATP and a membrane integral complex (V0) that translocates protons. V-ATPase is responsible for acidifying and maintaining the pH of intracellular compartments and in some cell types, is targeted to the plasma membrane, where it is responsible for acidifying the extracellular environment. May play a role in cilium biogenesis through regulation of the transport and the localization of proteins to the cilium. The protein is V-type proton ATPase subunit D (Atp6v1d) of Mus musculus (Mouse).